The sequence spans 21 residues: Chlorophyllase type 2 (21 aa).

It belongs to the AB hydrolase superfamily. Lipase family.

The catalysed reaction is a chlorophyll + H2O = a chlorophyllide + phytol + H(+). Its pathway is porphyrin-containing compound metabolism; chlorophyll degradation. Functionally, catalyzes the hydrolysis of ester bond in chlorophyll to yield chlorophyllide and phytol. This chain is Chlorophyllase type 2, found in Chenopodium album (Fat hen).